The primary structure comprises 168 residues: MHKLNVLAALKWYGVALLVILLDQITKNVASHMLVLHQPEPITSFFNFTLRHNFGAAFSMFHDAGGWQRWFLALLAAGVSVLLIFWIAKLPKQKWMEALALALVLGGALGNLYDRMLLGYVVDFIVVHYKEHEWPAFNIADSAICIGAALLVWDSLFGTKVAKYGDAK.

The next 3 helical transmembrane spans lie at 6 to 26 (VLAA…DQIT), 70 to 90 (WFLA…IAKL), and 98 to 118 (ALAL…RMLL). Active-site residues include Asp123 and Asp141. The chain crosses the membrane as a helical span at residues 139–159 (IADSAICIGAALLVWDSLFGT).

This sequence belongs to the peptidase A8 family.

Its subcellular location is the cell inner membrane. It catalyses the reaction Release of signal peptides from bacterial membrane prolipoproteins. Hydrolyzes -Xaa-Yaa-Zaa-|-(S,diacylglyceryl)Cys-, in which Xaa is hydrophobic (preferably Leu), and Yaa (Ala or Ser) and Zaa (Gly or Ala) have small, neutral side chains.. It participates in protein modification; lipoprotein biosynthesis (signal peptide cleavage). Its function is as follows. This protein specifically catalyzes the removal of signal peptides from prolipoproteins. This chain is Lipoprotein signal peptidase, found in Teredinibacter turnerae (strain ATCC 39867 / T7901).